An 890-amino-acid polypeptide reads, in one-letter code: uncharacterized protein (890 aa).

The first 20 residues, 1 to 20 (MKILKSLVLLVLFMAMPAKA), serve as a signal peptide directing secretion. 6 helical membrane passes run 518–538 (AALTLYVTIFGLMFVAGALKL), 567–587 (TYFFSAFTNGIDFFVTNVVGA), 613–633 (LLFIELLQIHNGLAFIAIITI), 651–671 (VIAFIGLTVMISLAPFFIILM), 684–704 (ISTLLSYVVQPTILLIFFLLI), and 775–795 (FLVLFTTALLFYSYCLMSYGL). Positions 860–890 (KARKPEGGEHTNKFLAERNDVPKKEEGERKE) are disordered. Basic and acidic residues predominate over residues 862–890 (RKPEGGEHTNKFLAERNDVPKKEEGERKE).

The protein belongs to the TrbL/VirB6 family.

It is found in the cell membrane. This is an uncharacterized protein from Rickettsia felis (strain ATCC VR-1525 / URRWXCal2) (Rickettsia azadi).